The primary structure comprises 177 residues: Transmembrane protein 196 (177 aa).

The next 4 helical transmembrane spans lie at 11–31 (LLVL…VGAV), 47–67 (SSPV…IFCA), 73–93 (LIMI…ILNI), and 106–126 (LYSL…GCTI). The segment covering 152 to 162 (HSHEMTEKDTE) has biased composition (basic and acidic residues). The segment at 152-177 (HSHEMTEKDTENITNGGGPLALNGRV) is disordered.

It is found in the cytoplasm. The protein localises to the membrane. The sequence is that of Transmembrane protein 196 (tmem196) from Xenopus tropicalis (Western clawed frog).